A 314-amino-acid polypeptide reads, in one-letter code: Leucine-rich repeat-containing protein 52 (314 aa).

An N-terminal signal peptide occupies residues 1 to 23; the sequence is MSLASGPSSKLLLFSLGMGLVSG. Residues 24–53 form the LRRNT domain; it reads SKCPNKCVCQDQEVACIDLHLTEYPADIPL. At 24-244 the chain is on the extracellular side; the sequence is SKCPNKCVCQ…MCITHLDQQD (221 aa). 2 disulfides stabilise this stretch: C26–C32 and C30–C39. LRR repeat units follow at residues 54-73, 78-99, 102-123, 126-148, and 151-172; these read NTRRLYLNNNKITSLPALQL, DLVYLDCQNNRIREVMDYTFIG, RLIYLDLSSNNLTSISPFSFSV, NLVRLNISHNPHLLYLDKYVFAN, and SLRYLDLRNTGLHIIDHNGFHH. Residues N112, N131, and N148 are each glycosylated (N-linked (GlcNAc...) asparagine). The region spanning 184–238 is the LRRCT domain; that stretch reads NPWICNCSFLDFTIHLLVSHMDHPDAQNATCTEPAELKGWPITKVGNPLQYMCIT. Intrachain disulfides connect C188-C214 and C190-C236. Residues N189 and N211 are each glycosylated (N-linked (GlcNAc...) asparagine). The helical transmembrane segment at 245–265 threads the bilayer; that stretch reads YIFLLLIGFCIFAAGTVAAWL. At 266–314 the chain is on the cytoplasmic side; it reads TGVCAVLYQNALRTSSGDDTEDETGSRFANQIFRSNTHLGPIRRFPELI.

As to quaternary structure, interacts with KCNMA1. Interacts with KCNU1; this interaction may be required for LRRC52 stability and changes the channel gating properties. Post-translationally, N-glycosylated. In terms of tissue distribution, testis-specific (at protein level). At the mRNA level, also detected in kidney, ventricle, spinal cord and skeletal muscle, although at lower levels compared to testis. Expression in testis at the protein level requires the presence of KCNU1.

Its subcellular location is the cell membrane. Functionally, auxiliary protein of the large-conductance, voltage and calcium-activated potassium channel (BK alpha). Modulates gating properties by producing a marked shift in the BK channel's voltage dependence of activation in the hyperpolarizing direction, and in the absence of calcium. KCNU1 channel auxiliary protein. Modulates KCNU1 gating properties, shifting KCNU1 gating to more negative potentials at a given pH. This chain is Leucine-rich repeat-containing protein 52 (Lrrc52), found in Mus musculus (Mouse).